Here is an 83-residue protein sequence, read N- to C-terminus: Arminin 3a (83 aa).

An N-terminal signal peptide occupies residues 1–18; the sequence is MKTVFAILFLTFIALTCA. A propeptide spanning residues 19-57 is cleaved from the precursor; the sequence is RNYEDLKEKIKNEVEREIFEDLEEESDELENNFKKFNDA. At A80 the chain carries Alanine amide.

The protein belongs to the arminin family. Expressed in entodermal epithelium along the body column.

The protein localises to the secreted. Its subcellular location is the target cell membrane. Functionally, antimicrobial peptide with a broad-spectrum antimicrobial activity. Keeps its antibacterial activity under a wide range of salt concentrations that mimic physiological conditions of human blood, which is surprising, since Hydra is an obligate freshwater animal with nearly no salt tolerance. Does not affect red blood cells. This chain is Arminin 3a, found in Hydra vulgaris (Hydra).